The primary structure comprises 151 residues: UPF0208 membrane protein PC1_2779 (151 aa).

The next 2 helical transmembrane spans lie at phenylalanine 46–glycine 66 and leucine 69–tryptophan 89.

This sequence belongs to the UPF0208 family.

The protein localises to the cell inner membrane. This Pectobacterium carotovorum subsp. carotovorum (strain PC1) protein is UPF0208 membrane protein PC1_2779.